The chain runs to 130 residues: Small ribosomal subunit protein uS9 (130 aa).

It belongs to the universal ribosomal protein uS9 family.

This Pseudoalteromonas atlantica (strain T6c / ATCC BAA-1087) protein is Small ribosomal subunit protein uS9.